Reading from the N-terminus, the 399-residue chain is A-type ATP synthase subunit C (399 aa).

It belongs to the V-ATPase V0D/AC39 subunit family. In terms of assembly, the A-type ATPase is composed of subunits A(3), B(3), C, D, E(1 or 2), F, H(2), I and K(x).

The protein localises to the cell membrane. Its function is as follows. Component of the A-type ATP synthase that produces ATP from ADP in the presence of a proton gradient across the membrane. The protein is A-type ATP synthase subunit C of Methanocaldococcus jannaschii (strain ATCC 43067 / DSM 2661 / JAL-1 / JCM 10045 / NBRC 100440) (Methanococcus jannaschii).